A 258-amino-acid chain; its full sequence is 5-oxoprolinase subunit A (258 aa).

Belongs to the LamB/PxpA family. Forms a complex composed of PxpA, PxpB and PxpC.

It carries out the reaction 5-oxo-L-proline + ATP + 2 H2O = L-glutamate + ADP + phosphate + H(+). Catalyzes the cleavage of 5-oxoproline to form L-glutamate coupled to the hydrolysis of ATP to ADP and inorganic phosphate. In Corynebacterium jeikeium (strain K411), this protein is 5-oxoprolinase subunit A.